The sequence spans 281 residues: 2-dehydro-3-deoxyphosphooctonate aldolase (281 aa).

This sequence belongs to the KdsA family.

Its subcellular location is the cytoplasm. It catalyses the reaction D-arabinose 5-phosphate + phosphoenolpyruvate + H2O = 3-deoxy-alpha-D-manno-2-octulosonate-8-phosphate + phosphate. Its pathway is carbohydrate biosynthesis; 3-deoxy-D-manno-octulosonate biosynthesis; 3-deoxy-D-manno-octulosonate from D-ribulose 5-phosphate: step 2/3. The protein operates within bacterial outer membrane biogenesis; lipopolysaccharide biosynthesis. The sequence is that of 2-dehydro-3-deoxyphosphooctonate aldolase from Pseudomonas fluorescens (strain ATCC BAA-477 / NRRL B-23932 / Pf-5).